We begin with the raw amino-acid sequence, 222 residues long: Coiled-coil domain-containing protein 70 (222 aa).

Residues 129 to 153 (NALWERDRNLLQEDKALWEEEKALW) are a coiled coil.

The sequence is that of Coiled-coil domain-containing protein 70 from Homo sapiens (Human).